A 523-amino-acid chain; its full sequence is Glutamate--cysteine ligase (523 aa).

Belongs to the glutamate--cysteine ligase type 1 family. Type 1 subfamily.

The enzyme catalyses L-cysteine + L-glutamate + ATP = gamma-L-glutamyl-L-cysteine + ADP + phosphate + H(+). Its pathway is sulfur metabolism; glutathione biosynthesis; glutathione from L-cysteine and L-glutamate: step 1/2. The chain is Glutamate--cysteine ligase from Shewanella oneidensis (strain ATCC 700550 / JCM 31522 / CIP 106686 / LMG 19005 / NCIMB 14063 / MR-1).